A 280-amino-acid chain; its full sequence is 2-dehydro-3-deoxyphosphooctonate aldolase (280 aa).

This sequence belongs to the KdsA family.

Its subcellular location is the cytoplasm. It carries out the reaction D-arabinose 5-phosphate + phosphoenolpyruvate + H2O = 3-deoxy-alpha-D-manno-2-octulosonate-8-phosphate + phosphate. The protein operates within carbohydrate biosynthesis; 3-deoxy-D-manno-octulosonate biosynthesis; 3-deoxy-D-manno-octulosonate from D-ribulose 5-phosphate: step 2/3. Its pathway is bacterial outer membrane biogenesis; lipopolysaccharide biosynthesis. In Coxiella burnetii (strain Dugway 5J108-111), this protein is 2-dehydro-3-deoxyphosphooctonate aldolase.